We begin with the raw amino-acid sequence, 268 residues long: Putative esterase/lipase 2 (268 aa).

His-29 is an active-site residue. The active-site Charge relay system is the Ser-98.

The protein belongs to the lipase/esterase LIP3/BchO family.

This chain is Putative esterase/lipase 2, found in Mycoplasma genitalium (strain ATCC 33530 / DSM 19775 / NCTC 10195 / G37) (Mycoplasmoides genitalium).